Consider the following 123-residue polypeptide: Con-ikot-ikot (123 aa).

Residues 1–18 (MAMNMSMTLCMFVMVVVA) form the signal peptide. A propeptide spanning residues 19 to 37 (ATVIDSTQLQEPDLSRMRR) is cleaved from the precursor. 5 disulfide bridges follow: Cys49–Cys80, Cys50–Cys89, Cys57–Cys72, Cys90–Cys118, and Cys96–Cys113.

Homodimer; disulfide-linked. In terms of tissue distribution, expressed by the venom duct.

The protein resides in the secreted. Its function is as follows. Potently and selectively blocks the desensitization of ionotropic glutamate AMPA receptors (GRIA1, GRIA2, GRIA3 and GRIA4). Binds to a different site than does the drug cyclothiazide. The toxin acts like a straitjacket on the 'gating ring' of the ligand-binding domain (LBD) of the receptor. It does so by restraining the domains via both intra- and interdimer cross-links such that agonist-induced closure of the LBD 'clamshells' is transduced into an irislike expansion of the gating ring. Compared to other desensitization blockers, it is a poor stabilizer of the open channel because toxin-bound AMPA receptors undergo frequent brief closures. In vitro, application of the toxin to hippocampal slices causes a large and rapid increase in resting AMPA receptor-mediated current leading to neuronal death. This Conus striatus (Striated cone) protein is Con-ikot-ikot.